The primary structure comprises 111 residues: MKHLAAYLLLALAGNTSPSSEDVKAVLSSVGIDADEERLNKLIAELEGKDLQELIAEGSTKLASVPSGGAAAAAPAAAGAAAGGAAAPAAEEKKEEEKEESDEDMGFGLFD.

The tract at residues 81–111 (AAGGAAAPAAEEKKEEEKEESDEDMGFGLFD) is disordered. Phosphoserine is present on Ser-101.

This sequence belongs to the eukaryotic ribosomal protein P1/P2 family. As to quaternary structure, P1 and P2 exist as dimers at the large ribosomal subunit.

Plays an important role in the elongation step of protein synthesis. The polypeptide is Large ribosomal subunit protein P2 (Aspergillus fumigatus (strain ATCC MYA-4609 / CBS 101355 / FGSC A1100 / Af293) (Neosartorya fumigata)).